The chain runs to 250 residues: tRNA (guanine-N(1)-)-methyltransferase (250 aa).

Residues Gly-116 and 136-141 contribute to the S-adenosyl-L-methionine site; that span reads IGDYVL.

Belongs to the RNA methyltransferase TrmD family. Homodimer.

It is found in the cytoplasm. The enzyme catalyses guanosine(37) in tRNA + S-adenosyl-L-methionine = N(1)-methylguanosine(37) in tRNA + S-adenosyl-L-homocysteine + H(+). Functionally, specifically methylates guanosine-37 in various tRNAs. In Stutzerimonas stutzeri (strain A1501) (Pseudomonas stutzeri), this protein is tRNA (guanine-N(1)-)-methyltransferase.